The primary structure comprises 399 residues: Tyrosine--tRNA ligase (399 aa).

Tyr-36 provides a ligand contact to L-tyrosine. Residues 41-50 (PTAPSLHIGN) carry the 'HIGH' region motif. L-tyrosine-binding residues include Tyr-166 and Gln-170. The 'KMSKS' region motif lies at 226-230 (KMGKS). Lys-229 serves as a coordination point for ATP. An S4 RNA-binding domain is found at 332 to 395 (TRLVDVIVDL…KKRFVTVQVI (64 aa)).

It belongs to the class-I aminoacyl-tRNA synthetase family. TyrS type 1 subfamily. In terms of assembly, homodimer.

It localises to the cytoplasm. The catalysed reaction is tRNA(Tyr) + L-tyrosine + ATP = L-tyrosyl-tRNA(Tyr) + AMP + diphosphate + H(+). In terms of biological role, catalyzes the attachment of tyrosine to tRNA(Tyr) in a two-step reaction: tyrosine is first activated by ATP to form Tyr-AMP and then transferred to the acceptor end of tRNA(Tyr). The polypeptide is Tyrosine--tRNA ligase (Mycoplasma pneumoniae (strain ATCC 29342 / M129 / Subtype 1) (Mycoplasmoides pneumoniae)).